A 160-amino-acid polypeptide reads, in one-letter code: Eosinophil cationic protein (160 aa).

The N-terminal stretch at 1–27 is a signal peptide; sequence MVPKLFTPQICLLLLLGLMGVEGSLHA. Residues 28–72 are required for nearly all of the bactericidal activities; partially involved in LPS-binding; it reads RPPQFTKAQWFAIQHINVNPPRCTIAMRVINNYQRRCKNQNTFLR. H42 acts as the Proton acceptor in catalysis. Cystine bridges form between C50/C110, C64/C123, C82/C138, and C89/C98. A 3'-nitrotyrosine modification is found at Y60. 65–69 is a binding site for substrate; it reads KNQNT. N-linked (GlcNAc...) asparagine glycans are attached at residues N84, N92, and N119. Residue H155 is the Proton donor of the active site.

Belongs to the pancreatic ribonuclease family. As to quaternary structure, interacts with bacterial lipopolysaccharide (LPS) and lipoteichoic acid (LTA). In vitro interacts with phospholipid bilayers.

Its subcellular location is the secreted. Functionally, cytotoxin and helminthotoxin with low-efficiency ribonuclease activity. Possesses a wide variety of biological activities. Exhibits antibacterial activity. This chain is Eosinophil cationic protein (RNASE3), found in Macaca nemestrina (Pig-tailed macaque).